The following is a 159-amino-acid chain: Phosphopantetheine adenylyltransferase (159 aa).

S9 lines the substrate pocket. ATP contacts are provided by residues 9–10 (SF) and H17. Positions 41, 73, and 87 each coordinate substrate. Residues 88-90 (GLR), E98, and 122-128 (YSFLSSS) contribute to the ATP site.

The protein belongs to the bacterial CoaD family. In terms of assembly, homohexamer. Mg(2+) is required as a cofactor.

The protein localises to the cytoplasm. The catalysed reaction is (R)-4'-phosphopantetheine + ATP + H(+) = 3'-dephospho-CoA + diphosphate. The protein operates within cofactor biosynthesis; coenzyme A biosynthesis; CoA from (R)-pantothenate: step 4/5. Its function is as follows. Reversibly transfers an adenylyl group from ATP to 4'-phosphopantetheine, yielding dephospho-CoA (dPCoA) and pyrophosphate. This chain is Phosphopantetheine adenylyltransferase, found in Streptomyces griseus subsp. griseus (strain JCM 4626 / CBS 651.72 / NBRC 13350 / KCC S-0626 / ISP 5235).